A 159-amino-acid chain; its full sequence is Ribosomal RNA large subunit methyltransferase H (159 aa).

Residues Leu-76, Gly-108, and 127–132 (FGLLTL) each bind S-adenosyl-L-methionine.

Belongs to the RNA methyltransferase RlmH family. In terms of assembly, homodimer.

It is found in the cytoplasm. The catalysed reaction is pseudouridine(1915) in 23S rRNA + S-adenosyl-L-methionine = N(3)-methylpseudouridine(1915) in 23S rRNA + S-adenosyl-L-homocysteine + H(+). Functionally, specifically methylates the pseudouridine at position 1915 (m3Psi1915) in 23S rRNA. This chain is Ribosomal RNA large subunit methyltransferase H, found in Streptococcus pyogenes serotype M6 (strain ATCC BAA-946 / MGAS10394).